A 1418-amino-acid chain; its full sequence is Transcriptional regulator ADR1 (1418 aa).

Low complexity-rich tracts occupy residues 34 to 44 (TTTTANMSNTT) and 68 to 93 (TSMS…TTTS). The tract at residues 34–96 (TTTTANMSNT…AATTTTSKKS (63 aa)) is disordered. 2 consecutive C2H2-type zinc fingers follow at residues 117-139 (FVCQ…ERSH) and 145-168 (FSCG…QKLH). Disordered regions lie at residues 181–285 (KSIK…LDQR), 403–426 (SQHG…RSES), 454–484 (VAAH…GLSR), 1132–1167 (NSNS…NNSN), and 1338–1362 (TNTN…NQHH). Residues 189–211 (GDDDDDDDDDDEEMANSEDENDH) are compositionally biased toward acidic residues. The segment covering 236–278 (NLFNSKQKPTKANTTKSKVAKLSTTTSRKNSTNPTRKNSSSLH) has biased composition (polar residues). Low complexity-rich tracts occupy residues 462 to 477 (QQQQ…QPNQ), 1145 to 1167 (NEIN…NNSN), and 1338 to 1356 (TNTN…DNGT).

It is found in the nucleus. Its function is as follows. Transcription factor involved in the regulation of hyphal growth. This chain is Transcriptional regulator ADR1 (ADR1), found in Candida albicans (strain SC5314 / ATCC MYA-2876) (Yeast).